A 698-amino-acid polypeptide reads, in one-letter code: Polyribonucleotide nucleotidyltransferase (698 aa).

Mg(2+) contacts are provided by Asp490 and Asp496. Positions 557–616 constitute a KH domain; the sequence is PKVVTMTIKPDKIRDVIGPGGKKINEIIDETGVKLDIEQDGTIFIGAVDQAMINRAREII. The 69-residue stretch at 626-694 folds into the S1 motif domain; it reads GQTYQATVKR…KQGRVNASHR (69 aa).

Belongs to the polyribonucleotide nucleotidyltransferase family. Mg(2+) is required as a cofactor.

Its subcellular location is the cytoplasm. The catalysed reaction is RNA(n+1) + phosphate = RNA(n) + a ribonucleoside 5'-diphosphate. Functionally, involved in mRNA degradation. Catalyzes the phosphorolysis of single-stranded polyribonucleotides processively in the 3'- to 5'-direction. The protein is Polyribonucleotide nucleotidyltransferase of Staphylococcus aureus (strain MSSA476).